The following is a 760-amino-acid chain: Xaa-Pro dipeptidyl-peptidase (760 aa).

Active-site charge relay system residues include Ser-349, Asp-469, and His-499.

This sequence belongs to the peptidase S15 family. As to quaternary structure, homodimer.

The protein localises to the cytoplasm. It carries out the reaction Hydrolyzes Xaa-Pro-|- bonds to release unblocked, N-terminal dipeptides from substrates including Ala-Pro-|-p-nitroanilide and (sequentially) Tyr-Pro-|-Phe-Pro-|-Gly-Pro-|-Ile.. Functionally, removes N-terminal dipeptides sequentially from polypeptides having unsubstituted N-termini provided that the penultimate residue is proline. This is Xaa-Pro dipeptidyl-peptidase from Streptococcus pyogenes serotype M28 (strain MGAS6180).